Consider the following 513-residue polypeptide: Putative fucosyltransferase-like protein (513 aa).

A disordered region spans residues 1 to 34; the sequence is MGVFSNLRGPRAGATHDEFPATNGSPSSSSSPSS. Topologically, residues 1-39 are cytoplasmic; sequence MGVFSNLRGPRAGATHDEFPATNGSPSSSSSPSSSIKRK. Residues 25-34 are compositionally biased toward low complexity; it reads SPSSSSSPSS. The helical; Signal-anchor for type II membrane protein transmembrane segment at 40 to 60 threads the bilayer; sequence LSNLLPLCVALVVIAEIGFLG. Residues 61–513 lie on the Lumenal side of the membrane; it reads RLDKVALVDT…PCAKFEVVFV (453 aa). N-linked (GlcNAc...) asparagine glycans are attached at residues N348 and N493.

The protein belongs to the glycosyltransferase 10 family.

It is found in the golgi apparatus. The protein localises to the golgi stack membrane. Its pathway is protein modification; protein glycosylation. In terms of biological role, may be involved in cell wall biosynthesis. May act as a fucosyltransferase. The sequence is that of Putative fucosyltransferase-like protein (FUT12) from Arabidopsis thaliana (Mouse-ear cress).